Consider the following 332-residue polypeptide: Melanocortin receptor 4 (332 aa).

Topologically, residues M1–Q43 are extracellular. N-linked (GlcNAc...) asparagine glycans are attached at residues N2, N17, and N26. Cystine bridges form between C40–C279 and C271–C277. A helical transmembrane segment spans residues L44 to I69. Residues A70–F81 lie on the Cytoplasmic side of the membrane. A helical membrane pass occupies residues F82–L106. E100 serves as a coordination point for Ca(2+). Residues L107–N123 lie on the Extracellular side of the membrane. N108 carries an N-linked (GlcNAc...) asparagine glycan. The Ca(2+) site is built by D122 and D126. A helical transmembrane segment spans residues V124–V145. The Cytoplasmic portion of the chain corresponds to D146 to R165. A helical membrane pass occupies residues V166 to I186. At Y187 to S191 the chain is on the extracellular side. A helical membrane pass occupies residues A192–M215. At F216–T248 the chain is on the cytoplasmic side. The chain crosses the membrane as a helical span at residues I249–C271. Topologically, residues P272–F280 are extracellular. Residues M281–L304 form a helical membrane-spanning segment. Over R305 to Y332 the chain is Cytoplasmic. The S-palmitoyl cysteine moiety is linked to residue C318.

This sequence belongs to the G-protein coupled receptor 1 family. In terms of assembly, homodimer; disulfide-linked, also forms higher order oligomers. Interacts with GNAS. Interacts with ATRNL1. Interacts with MGRN1; this interaction competes with GNAS-binding and thus inhibits agonist-induced cAMP production. Interacts with MRAP and MRAP2; these associated factors increase ligand-sensitivity and generation of cAMP.

It is found in the cell membrane. Its function is as follows. Hormone receptor that acts as a key component of the leptin-melanocortin pathway at the intersection of homeostatic maintenance of energetic state. Plays a role in regulating food intake: activation by a stimulating hormone such as anorexigenic alpha-melanocyte stimulating hormone (alpha-MSH) inhibits appetite, whereas binding to a natural antagonist like Agouti-related protein/AGRP promotes appetite. G-protein-coupled receptor that activates conventional Galphas signaling leading to induction of anorexogenic signaling in the hypothalamus to result in negative energy balance. Regulates the firing activity of neurons from the hypothalamus by alpha-MSH and AGRP independently of Galphas signaling by ligand-induced coupling of closure of inwardly rectifying potassium channel KCNJ13. In intestinal epithelial cells, plays a role in the inhibition of hepatic glucose production via nesfatin-1/NUCB2 leading to increased cyclic adenosine monophosphate (cAMP) levels and glucagon-like peptide 1 (GLP-1) secretion in the intestinal epithelium. In Mus musculus (Mouse), this protein is Melanocortin receptor 4 (Mc4r).